Here is a 382-residue protein sequence, read N- to C-terminus: D-galactonate dehydratase (382 aa).

Aspartate 183 provides a ligand contact to Mg(2+). The active-site Proton donor is the histidine 185. Residues glutamate 209 and glutamate 235 each contribute to the Mg(2+) site. Residue histidine 285 is the Proton acceptor of the active site. The interval 361–382 is disordered; sequence NENPPDWRNPVWRHSDGSIAEW.

The protein belongs to the mandelate racemase/muconate lactonizing enzyme family. GalD subfamily. Mg(2+) serves as cofactor.

The catalysed reaction is D-galactonate = 2-dehydro-3-deoxy-D-galactonate + H2O. Its pathway is carbohydrate acid metabolism; D-galactonate degradation; D-glyceraldehyde 3-phosphate and pyruvate from D-galactonate: step 1/3. Catalyzes the dehydration of D-galactonate to 2-keto-3-deoxy-D-galactonate. The protein is D-galactonate dehydratase of Xanthomonas oryzae pv. oryzae (strain MAFF 311018).